The chain runs to 73 residues: Large ribosomal subunit protein uL29 (73 aa).

It belongs to the universal ribosomal protein uL29 family.

The sequence is that of Large ribosomal subunit protein uL29 (rpmC) from Synechocystis sp. (strain ATCC 27184 / PCC 6803 / Kazusa).